Here is a 170-residue protein sequence, read N- to C-terminus: Adenine phosphoribosyltransferase (170 aa).

It belongs to the purine/pyrimidine phosphoribosyltransferase family. As to quaternary structure, homodimer.

It localises to the cytoplasm. It carries out the reaction AMP + diphosphate = 5-phospho-alpha-D-ribose 1-diphosphate + adenine. It functions in the pathway purine metabolism; AMP biosynthesis via salvage pathway; AMP from adenine: step 1/1. In terms of biological role, catalyzes a salvage reaction resulting in the formation of AMP, that is energically less costly than de novo synthesis. This is Adenine phosphoribosyltransferase from Maridesulfovibrio salexigens (strain ATCC 14822 / DSM 2638 / NCIMB 8403 / VKM B-1763) (Desulfovibrio salexigens).